A 420-amino-acid polypeptide reads, in one-letter code: Dynein axonemal assembly factor 4 (420 aa).

In terms of domain architecture, CS spans 3 to 87 (VRVSEFSWQQ…KEPVLWESLS (85 aa)). Residues 7–103 (EFSWQQTPAA…EMMQRIREKS (97 aa)) are mediates interaction with ESR1 and STUB1. Residues 165-192 (CQKKADGQKRVQRKEKPLQGKQAEERGA) show a composition bias toward basic and acidic residues. A disordered region spans residues 165 to 212 (CQKKADGQKRVQRKEKPLQGKQAEERGALKPQSLPRKAPPTRLPTRGR). 3 TPR repeats span residues 288–321 (PDWL…NRKI), 323–355 (VLYL…LTPP), and 364–397 (MKAH…DPAN).

In terms of assembly, interacts with ZMYND10. Interacts with STUB1. Interacts with ESR1 and ESR2. Interacts with DNAAF2. Interacts with CCT3, CCT4, CCT5 and CCT8. Interacts with DNAAF6/PIH1D3.

It localises to the nucleus. The protein resides in the cytoplasm. Its subcellular location is the cell projection. The protein localises to the neuron projection. It is found in the dynein axonemal particle. Functionally, involved in neuronal migration during development of the cerebral neocortex. May regulate the stability and proteasomal degradation of the estrogen receptors that play an important role in neuronal differentiation, survival and plasticity. Axonemal dynein assembly factor required for ciliary motility. This Rattus norvegicus (Rat) protein is Dynein axonemal assembly factor 4.